The following is a 313-amino-acid chain: L-lactate dehydrogenase 1 (313 aa).

The NAD(+) site is built by valine 15, aspartate 36, arginine 41, and tyrosine 66. Residues glutamine 83, arginine 89, and 121–124 (NPVD) contribute to the substrate site. NAD(+)-binding positions include 119–121 (ASN) and serine 144. 149–152 (DTAR) is a binding site for substrate. Residues arginine 154 and histidine 169 each contribute to the beta-D-fructose 1,6-bisphosphate site. Histidine 176 serves as the catalytic Proton acceptor. At tyrosine 218 the chain carries Phosphotyrosine. Threonine 227 serves as a coordination point for substrate.

This sequence belongs to the LDH/MDH superfamily. LDH family. Homotetramer.

It is found in the cytoplasm. The catalysed reaction is (S)-lactate + NAD(+) = pyruvate + NADH + H(+). It participates in fermentation; pyruvate fermentation to lactate; (S)-lactate from pyruvate: step 1/1. Its activity is regulated as follows. Allosterically activated by fructose 1,6-bisphosphate (FBP). In terms of biological role, catalyzes the conversion of lactate to pyruvate. The chain is L-lactate dehydrogenase 1 from Listeria innocua serovar 6a (strain ATCC BAA-680 / CLIP 11262).